The chain runs to 391 residues: D-alanine--D-alanine ligase (391 aa).

Positions 1 to 24 (MSSENLPQSPERAESPQAPRRKPR) are disordered. In terms of domain architecture, ATP-grasp spans 171 to 381 (KRVFLSFGLP…YPELVDRLIQ (211 aa)). 207 to 262 (AGEHGWPLFIKPARGGSSMGITKVDSVEGLDAAIEEARRHDPKFLVESLLRGREIE) contributes to the ATP binding site. Mg(2+)-binding residues include Asp-335, Glu-348, and Asn-350.

Belongs to the D-alanine--D-alanine ligase family. The cofactor is Mg(2+). Mn(2+) is required as a cofactor.

Its subcellular location is the cytoplasm. The enzyme catalyses 2 D-alanine + ATP = D-alanyl-D-alanine + ADP + phosphate + H(+). It participates in cell wall biogenesis; peptidoglycan biosynthesis. Functionally, cell wall formation. The sequence is that of D-alanine--D-alanine ligase from Streptomyces griseus subsp. griseus (strain JCM 4626 / CBS 651.72 / NBRC 13350 / KCC S-0626 / ISP 5235).